A 338-amino-acid chain; its full sequence is Glyceraldehyde-3-phosphate dehydrogenase GAPC2, cytosolic (338 aa).

NAD(+) contacts are provided by residues 15–16, D37, and R84; that span reads RI. 155-157 is a D-glyceraldehyde 3-phosphate binding site; that stretch reads SCT. Residue C156 is the Nucleophile of the active site. Position 156 is an S-glutathionyl cysteine; transient; alternate (C156). C156 bears the S-nitrosocysteine; transient; alternate mark. C160 bears the S-nitrosocysteine; transient mark. D-glyceraldehyde 3-phosphate contacts are provided by residues T186, 215–216, and R238; that span reads TG. N320 is an NAD(+) binding site.

The protein belongs to the glyceraldehyde-3-phosphate dehydrogenase family. Homotetramer. Interacts with PLDDELTA. Binds to DPB3-1/NF-YC10 in response to heat-stress; this interaction promotes DPB3-1/NF-YC10 DNA-binding ability to its target promoter. In terms of processing, S-glutathionylation at Cys-156 in the presence of oxidized glutathione (GSSG). S-nitrosylation at Cys-156 and Cys-160 in the presence of S-nitrosoglutathione (GSNO) or sodium nitroprusside (SNP). These reactions may be both a protective mechanism against irreversible oxidation and a mean to store inhibited enzyme in a recoverable form.

It localises to the cytoplasm. Its subcellular location is the nucleus. The enzyme catalyses D-glyceraldehyde 3-phosphate + phosphate + NAD(+) = (2R)-3-phospho-glyceroyl phosphate + NADH + H(+). It functions in the pathway carbohydrate degradation; glycolysis; pyruvate from D-glyceraldehyde 3-phosphate: step 1/5. Inhibition by oxidized glutathione (GSSG), S-nitrosoglutathione (GSNO) and hydrogen peroxide. Its function is as follows. Key enzyme in glycolysis that catalyzes the first step of the pathway by converting D-glyceraldehyde 3-phosphate (G3P) into 3-phospho-D-glyceroyl phosphate. Essential for the maintenance of cellular ATP levels and carbohydrate metabolism. Binds DNA in vitro. Together with DNA polymerase II subunit B3-1 (DPB3-1) and GAPC1, enhances heat tolerance and promotes the expression of heat-inducible genes. The polypeptide is Glyceraldehyde-3-phosphate dehydrogenase GAPC2, cytosolic (Arabidopsis thaliana (Mouse-ear cress)).